A 370-amino-acid chain; its full sequence is Chorismate synthase (370 aa).

Position 48 (arginine 48) interacts with NADP(+). FMN is bound by residues 125 to 127, 241 to 242, glycine 286, 301 to 305, and arginine 327; these read RSS, NA, and KPTSS.

The protein belongs to the chorismate synthase family. As to quaternary structure, homotetramer. The cofactor is FMNH2.

It catalyses the reaction 5-O-(1-carboxyvinyl)-3-phosphoshikimate = chorismate + phosphate. Its pathway is metabolic intermediate biosynthesis; chorismate biosynthesis; chorismate from D-erythrose 4-phosphate and phosphoenolpyruvate: step 7/7. Catalyzes the anti-1,4-elimination of the C-3 phosphate and the C-6 proR hydrogen from 5-enolpyruvylshikimate-3-phosphate (EPSP) to yield chorismate, which is the branch point compound that serves as the starting substrate for the three terminal pathways of aromatic amino acid biosynthesis. This reaction introduces a second double bond into the aromatic ring system. This Ruegeria sp. (strain TM1040) (Silicibacter sp.) protein is Chorismate synthase.